We begin with the raw amino-acid sequence, 274 residues long: MTTSTGDDRIDQLQQAITKSRRYQTVAPATVRRLARAALVASRGDVPDAVKRTKRGLHEIYGAFLPPSAPNYTALLRHLDSAVEAGDDEAVVRWDRRAMSVHMSTRERVPHLDEFYREIFRHVPRPNTLRDLACGLNPLAVPWMGLSDETVYVASDIDARLMDFVGAALTRLGVAHRTSVVDLLEARLDEPADVTLLLKTLPCLETQQRGSGWEVIDIVNSPIIVVTFPTKSLGQRSKGMFQNYSQSFESQASERSCRIQRLEIGNELIYVIHK.

S-adenosyl-L-methionine contacts are provided by residues F64, 102 to 104, R108, A133, D156, 182 to 183, L198, and Q207; these read HMS and DL.

It belongs to the methyltransferase superfamily. Aminoglycoside resistance family.

The enzyme catalyses guanosine(1405) in 16S rRNA + S-adenosyl-L-methionine = N(7)-methylguanosine(1405) in 16S rRNA + S-adenosyl-L-homocysteine. Its function is as follows. Specifically methylates the N(7) position of guanine 1405 in 16S rRNA. Confers resistance to aminoglycosides. The chain is 16S rRNA (guanine(1405)-N(7))-methyltransferase (grm) from Micromonospora rosea.